Here is a 167-residue protein sequence, read N- to C-terminus: Leptin (167 aa).

Positions 1 to 21 (MRCGPLYQFLWLWPYLSYVEA) are cleaved as a signal peptide. C117 and C167 form a disulfide bridge.

Belongs to the leptin family.

It is found in the secreted. Its function is as follows. Key player in the regulation of energy balance and body weight control. Once released into the circulation, has central and peripheral effects by binding LEPR, found in many tissues, which results in the activation of several major signaling pathways. In the hypothalamus, acts as an appetite-regulating factor that induces a decrease in food intake and an increase in energy consumption by inducing anorexinogenic factors and suppressing orexigenic neuropeptides, also regulates bone mass and secretion of hypothalamo-pituitary-adrenal hormones. In the periphery, increases basal metabolism, influences reproductive function, regulates pancreatic beta-cell function and insulin secretion, is pro-angiogenic for endothelial cell and affects innate and adaptive immunity. In the arcuate nucleus of the hypothalamus, activates by depolarization POMC neurons inducing FOS and SOCS3 expression to release anorexigenic peptides and inhibits by hyperpolarization NPY neurons inducing SOCS3 with a consequent reduction on release of orexigenic peptides. In addition to its known satiety inducing effect, has a modulatory role in nutrient absorption. In the intestine, reduces glucose absorption by enterocytes by activating PKC and leading to a sequential activation of p38, PI3K and ERK signaling pathways which exerts an inhibitory effect on glucose absorption. Acts as a growth factor on certain tissues, through the activation of different signaling pathways increases expression of genes involved in cell cycle regulation such as CCND1, via JAK2-STAT3 pathway, or VEGFA, via MAPK1/3 and PI3K-AKT1 pathways. May also play an apoptotic role via JAK2-STAT3 pathway and up-regulation of BIRC5 expression. Pro-angiogenic, has mitogenic activity on vascular endothelial cells and plays a role in matrix remodeling by regulating the expression of matrix metalloproteinases (MMPs) and tissue inhibitors of metalloproteinases (TIMPs). In innate immunity, modulates the activity and function of neutrophils by increasing chemotaxis and the secretion of oxygen radicals. Increases phagocytosis by macrophages and enhances secretion of pro-inflammatory mediators. Increases cytotoxic ability of NK cells. Plays a pro-inflammatory role, in synergy with IL1B, by inducing NOS2 which promotes the production of IL6, IL8 and Prostaglandin E2, through a signaling pathway that involves JAK2, PI3K, MAP2K1/MEK1 and MAPK14/p38. In adaptive immunity, promotes the switch of memory T-cells towards T helper-1 cell immune responses. Increases CD4(+)CD25(-) T-cell proliferation and reduces autophagy during TCR (T-cell receptor) stimulation, through MTOR signaling pathway activation and BCL2 up-regulation. This chain is Leptin (LEP), found in Bubalus bubalis (Domestic water buffalo).